A 37-amino-acid polypeptide reads, in one-letter code: Potassium channel toxin alpha-KTx 3.13 (37 aa).

Intrachain disulfides connect cysteine 7/cysteine 27, cysteine 13/cysteine 32, and cysteine 17/cysteine 34. A Lysine amide modification is found at lysine 37.

It belongs to the short scorpion toxin superfamily. Potassium channel inhibitor family. Alpha-KTx 03 subfamily. Expressed by the venom gland.

It is found in the secreted. Functionally, blocks voltage-gated potassium channels Kv1.1/KCNA1 (IC(50)=203.15 pM), Kv1.2/KCNA2 (IC(50)=8.92 nM) from rat and human Kv1.3 KCNA3/KCNA3 (IC(50)=171 pM) potently. At 2 uM, also blocks Shaker IR and has a moderate effect on rat Kv1.6/KCNA6. This is Potassium channel toxin alpha-KTx 3.13 from Mesobuthus eupeus (Lesser Asian scorpion).